Here is a 329-residue protein sequence, read N- to C-terminus: Phenylalanine--tRNA ligase alpha subunit (329 aa).

Glutamate 254 is a binding site for Mg(2+).

This sequence belongs to the class-II aminoacyl-tRNA synthetase family. Phe-tRNA synthetase alpha subunit type 1 subfamily. Tetramer of two alpha and two beta subunits. Mg(2+) is required as a cofactor.

The protein localises to the cytoplasm. It carries out the reaction tRNA(Phe) + L-phenylalanine + ATP = L-phenylalanyl-tRNA(Phe) + AMP + diphosphate + H(+). The polypeptide is Phenylalanine--tRNA ligase alpha subunit (Histophilus somni (strain 129Pt) (Haemophilus somnus)).